Reading from the N-terminus, the 403-residue chain is Phosphoglycerate kinase (403 aa).

Residues aspartate 21–asparagine 23, arginine 36, histidine 59–arginine 62, arginine 119, and arginine 159 each bind substrate. Residues lysine 214, glycine 301, glutamate 332, and glycine 359 to serine 362 each bind ATP.

The protein belongs to the phosphoglycerate kinase family. In terms of assembly, monomer.

It localises to the cytoplasm. It carries out the reaction (2R)-3-phosphoglycerate + ATP = (2R)-3-phospho-glyceroyl phosphate + ADP. It functions in the pathway carbohydrate degradation; glycolysis; pyruvate from D-glyceraldehyde 3-phosphate: step 2/5. In Lactobacillus delbrueckii subsp. bulgaricus (strain ATCC 11842 / DSM 20081 / BCRC 10696 / JCM 1002 / NBRC 13953 / NCIMB 11778 / NCTC 12712 / WDCM 00102 / Lb 14), this protein is Phosphoglycerate kinase.